We begin with the raw amino-acid sequence, 165 residues long: Adenine phosphoribosyltransferase (165 aa).

Belongs to the purine/pyrimidine phosphoribosyltransferase family. Homodimer.

The protein resides in the cytoplasm. It carries out the reaction AMP + diphosphate = 5-phospho-alpha-D-ribose 1-diphosphate + adenine. The protein operates within purine metabolism; AMP biosynthesis via salvage pathway; AMP from adenine: step 1/1. In terms of biological role, catalyzes a salvage reaction resulting in the formation of AMP, that is energically less costly than de novo synthesis. This Bdellovibrio bacteriovorus (strain ATCC 15356 / DSM 50701 / NCIMB 9529 / HD100) protein is Adenine phosphoribosyltransferase.